A 396-amino-acid polypeptide reads, in one-letter code: Elongation factor Tu (396 aa).

In terms of domain architecture, tr-type G spans 10–205; the sequence is KPHVNIGTIG…ACDDNIPDPV (196 aa). The G1 stretch occupies residues 19 to 26; the sequence is GHVDHGKT. 19–26 contributes to the GTP binding site; sequence GHVDHGKT. T26 contacts Mg(2+). Residues 62 to 66 form a G2 region; the sequence is GITIN. Residues 83-86 are G3; sequence DAPG. Residues 83–87 and 138–141 each bind GTP; these read DAPGH and NKCD. The tract at residues 138–141 is G4; it reads NKCD. The interval 175 to 177 is G5; that stretch reads SAL.

The protein belongs to the TRAFAC class translation factor GTPase superfamily. Classic translation factor GTPase family. EF-Tu/EF-1A subfamily. Monomer.

It localises to the cytoplasm. The catalysed reaction is GTP + H2O = GDP + phosphate + H(+). Its function is as follows. GTP hydrolase that promotes the GTP-dependent binding of aminoacyl-tRNA to the A-site of ribosomes during protein biosynthesis. This is Elongation factor Tu from Corynebacterium efficiens (strain DSM 44549 / YS-314 / AJ 12310 / JCM 11189 / NBRC 100395).